Reading from the N-terminus, the 402-residue chain is Phosphoglycerate kinase (402 aa).

Substrate contacts are provided by residues 24–26 (DFN), arginine 40, 63–66 (HFGR), arginine 122, and arginine 155. Residues lysine 206, glycine 297, glutamate 328, and 357–360 (GGDS) each bind ATP.

Belongs to the phosphoglycerate kinase family. As to quaternary structure, monomer.

Its subcellular location is the cytoplasm. The catalysed reaction is (2R)-3-phosphoglycerate + ATP = (2R)-3-phospho-glyceroyl phosphate + ADP. It functions in the pathway carbohydrate degradation; glycolysis; pyruvate from D-glyceraldehyde 3-phosphate: step 2/5. The polypeptide is Phosphoglycerate kinase (Synechococcus sp. (strain ATCC 27144 / PCC 6301 / SAUG 1402/1) (Anacystis nidulans)).